A 436-amino-acid chain; its full sequence is Enolase (436 aa).

A (2R)-2-phosphoglycerate-binding site is contributed by Gln-167. Residue Glu-209 is the Proton donor of the active site. Mg(2+)-binding residues include Asp-246, Glu-291, and Asp-318. Lys-343, Arg-372, Ser-373, and Lys-394 together coordinate (2R)-2-phosphoglycerate. Lys-343 serves as the catalytic Proton acceptor.

It belongs to the enolase family. In terms of assembly, component of the RNA degradosome, a multiprotein complex involved in RNA processing and mRNA degradation. It depends on Mg(2+) as a cofactor.

The protein resides in the cytoplasm. It is found in the secreted. Its subcellular location is the cell surface. The enzyme catalyses (2R)-2-phosphoglycerate = phosphoenolpyruvate + H2O. The protein operates within carbohydrate degradation; glycolysis; pyruvate from D-glyceraldehyde 3-phosphate: step 4/5. Functionally, catalyzes the reversible conversion of 2-phosphoglycerate (2-PG) into phosphoenolpyruvate (PEP). It is essential for the degradation of carbohydrates via glycolysis. This is Enolase from Glaesserella parasuis serovar 5 (strain SH0165) (Haemophilus parasuis).